We begin with the raw amino-acid sequence, 190 residues long: Crossover junction endodeoxyribonuclease RuvC (190 aa).

Residues Asp8, Glu67, and Asp139 contribute to the active site. Residues Asp8, Glu67, and Asp139 each contribute to the Mg(2+) site.

It belongs to the RuvC family. As to quaternary structure, homodimer which binds Holliday junction (HJ) DNA. The HJ becomes 2-fold symmetrical on binding to RuvC with unstacked arms; it has a different conformation from HJ DNA in complex with RuvA. In the full resolvosome a probable DNA-RuvA(4)-RuvB(12)-RuvC(2) complex forms which resolves the HJ. Mg(2+) is required as a cofactor.

Its subcellular location is the cytoplasm. The catalysed reaction is Endonucleolytic cleavage at a junction such as a reciprocal single-stranded crossover between two homologous DNA duplexes (Holliday junction).. In terms of biological role, the RuvA-RuvB-RuvC complex processes Holliday junction (HJ) DNA during genetic recombination and DNA repair. Endonuclease that resolves HJ intermediates. Cleaves cruciform DNA by making single-stranded nicks across the HJ at symmetrical positions within the homologous arms, yielding a 5'-phosphate and a 3'-hydroxyl group; requires a central core of homology in the junction. The consensus cleavage sequence is 5'-(A/T)TT(C/G)-3'. Cleavage occurs on the 3'-side of the TT dinucleotide at the point of strand exchange. HJ branch migration catalyzed by RuvA-RuvB allows RuvC to scan DNA until it finds its consensus sequence, where it cleaves and resolves the cruciform DNA. The polypeptide is Crossover junction endodeoxyribonuclease RuvC (Haemophilus influenzae (strain ATCC 51907 / DSM 11121 / KW20 / Rd)).